The sequence spans 357 residues: Cobalt-precorrin-5B C(1)-methyltransferase (357 aa).

It belongs to the CbiD family.

The enzyme catalyses Co-precorrin-5B + S-adenosyl-L-methionine = Co-precorrin-6A + S-adenosyl-L-homocysteine. Its pathway is cofactor biosynthesis; adenosylcobalamin biosynthesis; cob(II)yrinate a,c-diamide from sirohydrochlorin (anaerobic route): step 6/10. Catalyzes the methylation of C-1 in cobalt-precorrin-5B to form cobalt-precorrin-6A. The polypeptide is Cobalt-precorrin-5B C(1)-methyltransferase (Rhodospirillum rubrum (strain ATCC 11170 / ATH 1.1.1 / DSM 467 / LMG 4362 / NCIMB 8255 / S1)).